Here is a 485-residue protein sequence, read N- to C-terminus: Glutamate--tRNA ligase (485 aa).

The 'HIGH' region signature appears at 11–21 (PSPTGHLHIGN). Positions 252–256 (KLSKR) match the 'KMSKS' region motif. K255 is a binding site for ATP.

The protein belongs to the class-I aminoacyl-tRNA synthetase family. Glutamate--tRNA ligase type 1 subfamily. As to quaternary structure, monomer.

It localises to the cytoplasm. It catalyses the reaction tRNA(Glu) + L-glutamate + ATP = L-glutamyl-tRNA(Glu) + AMP + diphosphate. In terms of biological role, catalyzes the attachment of glutamate to tRNA(Glu) in a two-step reaction: glutamate is first activated by ATP to form Glu-AMP and then transferred to the acceptor end of tRNA(Glu). The sequence is that of Glutamate--tRNA ligase from Bacillus licheniformis (strain ATCC 14580 / DSM 13 / JCM 2505 / CCUG 7422 / NBRC 12200 / NCIMB 9375 / NCTC 10341 / NRRL NRS-1264 / Gibson 46).